Consider the following 169-residue polypeptide: DNA damage-inducible transcript 3 protein (169 aa).

An interaction with TRIB3 region spans residues 10–18 (FGTLSSWEL). Positions 10–26 (FGTLSSWELEAWYEDLQ) are N-terminal. Residues S14, S15, S30, and S31 each carry the phosphoserine; by CK2 modification. The interval 32–139 (DENGGTYVSP…KVAQLAEENE (108 aa)) is disordered. Residues 74 to 89 (TSTSQSPHSPDSSQSS) are compositionally biased toward low complexity. A phosphoserine; by MAPK14 mark is found at S79 and S82. One can recognise a bZIP domain in the interval 99-162 (QGRTRKRKQS…EATRRALIDR (64 aa)). The interval 101 to 130 (RTRKRKQSGHSPARAGKQRMKEKEQENERK) is basic motif. The span at 119-139 (RMKEKEQENERKVAQLAEENE) shows a compositional bias: basic and acidic residues. A leucine-zipper region spans residues 134-148 (LAEENERLKQEIERL).

It belongs to the bZIP family. As to quaternary structure, heterodimer. Interacts with TCF7L2/TCF4, EP300/P300, HDAC1, HDAC5 and HDAC6. Interacts with TRIB3 which blocks its association with EP300/P300. Interacts with FOXO3, CEBPB and ATF4. In terms of assembly, interacts with isoform AltDDIT3 of DDIT3. Post-translationally, ubiquitinated, leading to its degradation by the proteasome. Phosphorylation at serine residues by MAPK14 enhances its transcriptional activation activity while phosphorylation at serine residues by CK2 inhibits its transcriptional activation activity.

It is found in the cytoplasm. It localises to the nucleus. Multifunctional transcription factor in endoplasmic reticulum (ER) stress response. Plays an essential role in the response to a wide variety of cell stresses and induces cell cycle arrest and apoptosis in response to ER stress. Plays a dual role both as an inhibitor of CCAAT/enhancer-binding protein (C/EBP) function and as an activator of other genes. Acts as a dominant-negative regulator of C/EBP-induced transcription: dimerizes with members of the C/EBP family, impairs their association with C/EBP binding sites in the promoter regions, and inhibits the expression of C/EBP regulated genes. Positively regulates the transcription of TRIB3, IL6, IL8, IL23, TNFRSF10B/DR5, PPP1R15A/GADD34, BBC3/PUMA, BCL2L11/BIM and ERO1L. Negatively regulates; expression of BCL2 and MYOD1, ATF4-dependent transcriptional activation of asparagine synthetase (ASNS), CEBPA-dependent transcriptional activation of hepcidin (HAMP) and CEBPB-mediated expression of peroxisome proliferator-activated receptor gamma (PPARG). Together with ATF4, mediates ER-mediated cell death by promoting expression of genes involved in cellular amino acid metabolic processes, mRNA translation and the unfolded protein response (UPR) in response to ER stress. Inhibits the canonical Wnt signaling pathway by binding to TCF7L2/TCF4, impairing its DNA-binding properties and repressing its transcriptional activity. Plays a regulatory role in the inflammatory response through the induction of caspase-11 (CASP4/CASP11) which induces the activation of caspase-1 (CASP1) and both these caspases increase the activation of pro-IL1B to mature IL1B which is involved in the inflammatory response. Acts as a major regulator of postnatal neovascularization through regulation of endothelial nitric oxide synthase (NOS3)-related signaling. This chain is DNA damage-inducible transcript 3 protein (DDIT3), found in Homo sapiens (Human).